The chain runs to 224 residues: Transcriptional regulatory protein CiaR (224 aa).

The Response regulatory domain maps to 3–116; the sequence is KILLVEDDLG…ELKMRIQALL (114 aa). D51 carries the post-translational modification 4-aspartylphosphate. A DNA-binding region (ompR/PhoB-type) is located at residues 124 to 222; sequence ENTLTYGNIV…LRSVGYLLKD (99 aa).

Post-translationally, phosphorylated by CiaH.

It localises to the cytoplasm. Functionally, member of the two-component regulatory system CiaH/CiaR. Involved in early steps of competence regulation and in penicillin susceptibility. In Streptococcus pneumoniae (strain ATCC BAA-255 / R6), this protein is Transcriptional regulatory protein CiaR (ciaR).